A 427-amino-acid polypeptide reads, in one-letter code: Dorsalin-1 (427 aa).

A signal peptide spans 1 to 20; that stretch reads MHYFGVLAALSVFNIIACLT. The propeptide occupies 21–318; that stretch reads RGKPLENWKK…PRQHSSRSKR (298 aa). Residues N71, N136, N265, and N292 are each glycosylated (N-linked (GlcNAc...) asparagine). Residues 288–321 are disordered; it reads KLGKNDSSSEEEQREEKAIARPRQHSSRSKRSIG. Residues 307-321 show a composition bias toward basic residues; sequence ARPRQHSSRSKRSIG. Intrachain disulfides connect C325/C391, C354/C424, and C358/C426.

It belongs to the TGF-beta family. As to quaternary structure, homodimer; disulfide-linked. Expressed selectively in the dorsal neural tube. Lower levels seen in kidney and myotomal cells.

It is found in the secreted. Its function is as follows. Appears to regulate cell differentiation within the neural tube. May regulate the differentiation of cell types along the dorsoventral axis of the neural tube, acting in conjunction with distinct ventralizing signals from the notochord and floor plate. Controls the cell differentiation in the neural tube in several ways: (1) promotes the differentiation of cell types that derive from the dorsal neural tube. (2) ensures that the dorsal neural tube is refractory to ventralizing species from the notochord. (3) can diffuse and influence the fate of cells in more ventral regions of the neural tube. The protein is Dorsalin-1 (DSL1) of Gallus gallus (Chicken).